A 688-amino-acid polypeptide reads, in one-letter code: Homoaconitase, mitochondrial (688 aa).

The N-terminal 19 residues, 1-19 (MALLYLSTRSSLKKTGARC), are a transit peptide targeting the mitochondrion. Residues Cys-346, Cys-406, and Cys-409 each coordinate [4Fe-4S] cluster.

It belongs to the aconitase/IPM isomerase family. [4Fe-4S] cluster is required as a cofactor.

The protein localises to the mitochondrion. The enzyme catalyses (2R,3S)-homoisocitrate = cis-homoaconitate + H2O. It functions in the pathway amino-acid biosynthesis; L-lysine biosynthesis via AAA pathway; L-alpha-aminoadipate from 2-oxoglutarate: step 3/5. Functionally, catalyzes the reversible hydration of cis-homoaconitate to (2R,3S)-homoisocitrate, a step in the alpha-aminoadipate pathway for lysine biosynthesis. In Debaryomyces hansenii (strain ATCC 36239 / CBS 767 / BCRC 21394 / JCM 1990 / NBRC 0083 / IGC 2968) (Yeast), this protein is Homoaconitase, mitochondrial (LYS4).